A 125-amino-acid chain; its full sequence is Phosphoribosyl-AMP cyclohydrolase (125 aa).

D74 is a Mg(2+) binding site. Zn(2+) is bound at residue C75. 2 residues coordinate Mg(2+): D76 and D78. 2 residues coordinate Zn(2+): C92 and C99.

It belongs to the PRA-CH family. As to quaternary structure, homodimer. It depends on Mg(2+) as a cofactor. The cofactor is Zn(2+).

Its subcellular location is the cytoplasm. The enzyme catalyses 1-(5-phospho-beta-D-ribosyl)-5'-AMP + H2O = 1-(5-phospho-beta-D-ribosyl)-5-[(5-phospho-beta-D-ribosylamino)methylideneamino]imidazole-4-carboxamide. It functions in the pathway amino-acid biosynthesis; L-histidine biosynthesis; L-histidine from 5-phospho-alpha-D-ribose 1-diphosphate: step 3/9. Catalyzes the hydrolysis of the adenine ring of phosphoribosyl-AMP. The polypeptide is Phosphoribosyl-AMP cyclohydrolase (Syntrophotalea carbinolica (strain DSM 2380 / NBRC 103641 / GraBd1) (Pelobacter carbinolicus)).